We begin with the raw amino-acid sequence, 653 residues long: Probable sulfate transporter 3.4 (653 aa).

The Cytoplasmic portion of the chain corresponds to 1–92 (MGHGTNRVED…QYDLKLLRSD (92 aa)). The chain crosses the membrane as a helical span at residues 93-113 (VISGLTIASLAIPQGISYAKL). Over 114 to 115 (AN) the chain is Extracellular. A helical membrane pass occupies residues 116–136 (LPPIVGLYSSFVPPLIYAVLG). The Cytoplasmic segment spans residues 137 to 140 (SSRH). Residues 141-161 (LAVGPVSIASLVMGSMLSESV) traverse the membrane as a helical segment. Over 162-167 (SPTQDS) the chain is Extracellular. The helical transmembrane segment at 168–188 (ILYLKLAFTSTFFAGVFQASL) threads the bilayer. Residues 189 to 194 (GLLRLG) are Cytoplasmic-facing. A helical membrane pass occupies residues 195 to 215 (FMIDFLSKATLIGFTAGAAVI). Over 216-247 (VSLQQLKGLLGIVHFTGKMQIVPVMSSVFNHR) the chain is Extracellular. Residues 248–268 (SEWSWETIVMGIGFLSILLTT) traverse the membrane as a helical segment. Residues 269–279 (RHISMRKPKLF) are Cytoplasmic-facing. A helical transmembrane segment spans residues 280–300 (WISAASPLASVIISTLLVYLI). Over 301–331 (RSKTHAISFIGHLPKGLNPPSLNMLYFSGAH) the chain is Extracellular. A helical transmembrane segment spans residues 332–352 (LALAIKTGIITGILSLTEGIA). Over 353–370 (VGRTFASLKNYQVNGNKE) the chain is Cytoplasmic. The helical transmembrane segment at 371–391 (MMAIGFMNMAGSCTSCYVTTG) threads the bilayer. At 392–407 (SFSRSAVNYNAGAKTA) the chain is on the extracellular side. The helical transmembrane segment at 408–428 (VSNIVMASAVLVTLLFLMPLF) threads the bilayer. Over 429–433 (YYTPN) the chain is Cytoplasmic. Residues 434–454 (VILAAIILTAVIGLIDYQAAY) form a helical membrane-spanning segment. Over 455–471 (KLWKVDKFDFFTCLCSF) the chain is Extracellular. Residues 472-492 (FGVLFVSVPLGLAIAVAVSVI) form a helical membrane-spanning segment. At 493–653 (KILLHVTRPN…SSTWKANGQP (161 aa)) the chain is on the cytoplasmic side. Positions 520-643 (RYREASRIPG…LTVGEAVADL (124 aa)) constitute an STAS domain.

This sequence belongs to the SLC26A/SulP transporter (TC 2.A.53) family.

The protein resides in the membrane. Functionally, h(+)/sulfate cotransporter that may play a role in the regulation of sulfate assimilation. The protein is Probable sulfate transporter 3.4 (SULTR3;4) of Arabidopsis thaliana (Mouse-ear cress).